A 508-amino-acid polypeptide reads, in one-letter code: UDP-N-acetylmuramoyl-L-alanyl-D-glutamate--2,6-diaminopimelate ligase (508 aa).

S33 contacts UDP-N-acetyl-alpha-D-muramoyl-L-alanyl-D-glutamate. Residue 121–127 (GTNGKST) coordinates ATP. Residues N162, 163 to 164 (TT), S190, Q196, and R198 contribute to the UDP-N-acetyl-alpha-D-muramoyl-L-alanyl-D-glutamate site. An N6-carboxylysine modification is found at K230. Meso-2,6-diaminopimelate contacts are provided by residues R399, 423-426 (DNPR), G474, and E478. Positions 423 to 426 (DNPR) match the Meso-diaminopimelate recognition motif motif.

This sequence belongs to the MurCDEF family. MurE subfamily. The cofactor is Mg(2+). Carboxylation is probably crucial for Mg(2+) binding and, consequently, for the gamma-phosphate positioning of ATP.

The protein localises to the cytoplasm. It catalyses the reaction UDP-N-acetyl-alpha-D-muramoyl-L-alanyl-D-glutamate + meso-2,6-diaminopimelate + ATP = UDP-N-acetyl-alpha-D-muramoyl-L-alanyl-gamma-D-glutamyl-meso-2,6-diaminopimelate + ADP + phosphate + H(+). It participates in cell wall biogenesis; peptidoglycan biosynthesis. Functionally, catalyzes the addition of meso-diaminopimelic acid to the nucleotide precursor UDP-N-acetylmuramoyl-L-alanyl-D-glutamate (UMAG) in the biosynthesis of bacterial cell-wall peptidoglycan. The sequence is that of UDP-N-acetylmuramoyl-L-alanyl-D-glutamate--2,6-diaminopimelate ligase from Buchnera aphidicola subsp. Baizongia pistaciae (strain Bp).